Consider the following 136-residue polypeptide: Small ribosomal subunit protein uS9 (136 aa).

Residues 97–136 (SPDNRKPLKTEGHLSRDPRAKERRKYGLKKARKAPQFSKR) are disordered. Residues 98–116 (PDNRKPLKTEGHLSRDPRA) are compositionally biased toward basic and acidic residues. Positions 117-136 (KERRKYGLKKARKAPQFSKR) are enriched in basic residues.

It belongs to the universal ribosomal protein uS9 family.

The chain is Small ribosomal subunit protein uS9 from Prochlorococcus marinus (strain MIT 9301).